The chain runs to 250 residues: uncharacterized protein (250 aa).

The segment at 182 to 205 is disordered; that stretch reads HTPIVSIQTPPPPAPTPNRPDVPA. Residues 190–201 show a composition bias toward pro residues; the sequence is TPPPPAPTPNRP. The chain crosses the membrane as a helical span at residues 230–250; sequence TRISVIPLLSVLLLVIIIILL.

This sequence belongs to the ascovirus HvAV ORF18 family.

It localises to the membrane. This is an uncharacterized protein from Spodoptera frugiperda ascovirus 1a (SfAV-1a).